Consider the following 206-residue polypeptide: Large ribosomal subunit protein uL4 (206 aa).

The disordered stretch occupies residues 63–93 (MYKQKGTGRARHHSARAPQFRGGGKAHGPVV). Residues 64–77 (YKQKGTGRARHHSA) show a composition bias toward basic residues.

It belongs to the universal ribosomal protein uL4 family. Part of the 50S ribosomal subunit.

In terms of biological role, one of the primary rRNA binding proteins, this protein initially binds near the 5'-end of the 23S rRNA. It is important during the early stages of 50S assembly. It makes multiple contacts with different domains of the 23S rRNA in the assembled 50S subunit and ribosome. Functionally, forms part of the polypeptide exit tunnel. This is Large ribosomal subunit protein uL4 from Rhizobium meliloti (strain 1021) (Ensifer meliloti).